The following is a 1719-amino-acid chain: Cilia- and flagella-associated protein 43 (1719 aa).

Residues 94 to 120 form a disordered region; it reads VREEGAGGGADKPSGSGAVSGKQQSSG. WD repeat units follow at residues 122-165, 174-214, 226-263, 308-345, 413-452, and 513-552; these read SVVL…GRCR, SSTS…EKAV, PAGAEVTCHAWGPGGLYVGTSTGGLVLLDTATMAPLQL, TSGAAVTALTLNRDLVAVAGADGSVRVFVSVPAAAAAI, CHVGRLAGVVPHPGGGAFLTTGSDGSVRVWSTTDGALLGR, and LHSAPVDVLVFSPANDLLLSAGRDGIAWLCSVDARGGRVR. The disordered stretch occupies residues 569-596; it reads TWPRSDGGSGAASGHAQAGPVSTTSAEG. WD repeat units lie at residues 697–736 and 749–788; these read AHARASGGVAVAPGGHLLASGAADGTVALRNMSLITLAAQ and ITAGGVVTVSFDATGRYLASAGADGALFVYELSKRAAVAN. The tract at residues 1022 to 1045 is disordered; sequence RAKQEAARKADEDAAKRSAKDNAG. The stretch at 1073–1114 is one WD 9 repeat; that stretch reads PKPAWLVALGVEPDAVNPKLITEEQNRELKEWQAKEKSLQEE. Disordered stretches follow at residues 1220–1269, 1277–1296, and 1325–1372; these read MPGG…AAAA, ATAAGGAGSSGGAAPCGAAG, and TLNP…AAAA. The segment covering 1221 to 1233 has biased composition (gly residues); the sequence is PGGGAIGAAGGHQ. Residues 1257 to 1269 are compositionally biased toward low complexity; that stretch reads ASLAHSPSGAAAA. Positions 1344–1358 are enriched in low complexity; the sequence is SSALHPSHSHASVHG. Coiled-coil stretches lie at residues 1524-1609 and 1651-1679; these read AAQW…RSAQ and HKKLKEIALAQQNELGELRQQLEKLRLRT. Residues 1685-1719 form a disordered region; it reads ESGAVAGMPSPPRRLPPDIKLLAGSPSSSSVAGRT. Positions 1709–1719 are enriched in polar residues; sequence SPSSSSVAGRT.

The protein belongs to the CFAP43 family.

It is found in the cell projection. Its subcellular location is the cilium. The protein localises to the flagellum. The protein resides in the cytoplasm. It localises to the cytoskeleton. It is found in the flagellum axoneme. Functionally, flagellar protein involved in flagellum axoneme organization and function. The protein is Cilia- and flagella-associated protein 43 of Chlamydomonas reinhardtii (Chlamydomonas smithii).